A 146-amino-acid polypeptide reads, in one-letter code: Large ribosomal subunit protein uL15 (146 aa).

The disordered stretch occupies residues 1–54 (MKLHELKPAAGSKKAPKRIGRGTGSGLGRNAGKGEKGQNARSGGGVRPGFEGGQ). 2 stretches are compositionally biased toward gly residues: residues 21–31 (RGTGSGLGRNA) and 42–52 (SGGGVRPGFEG).

It belongs to the universal ribosomal protein uL15 family. Part of the 50S ribosomal subunit.

In terms of biological role, binds to the 23S rRNA. The protein is Large ribosomal subunit protein uL15 of Clostridium beijerinckii (strain ATCC 51743 / NCIMB 8052) (Clostridium acetobutylicum).